The chain runs to 488 residues: Monothiol glutaredoxin-S17 (488 aa).

The 106-residue stretch at 2 to 107 folds into the Thioredoxin domain; the sequence is SGTVKDIVSK…LANKVGKVAG (106 aa). 3 Glutaredoxin domains span residues 154-256, 284-386, and 391-488; these read KSRL…GITT, RARL…GITG, and EDRL…TLSE. Position 408 (Lys-408) interacts with glutathione. Cys-416 is a binding site for [2Fe-2S] cluster. Glutathione-binding positions include Arg-445, Phe-457, and 470–471; that span reads CD.

The protein belongs to the glutaredoxin family. CGFS subfamily. In terms of assembly, [2Fe-2S]-bridged holo-homodimer. Interacts in vitro with SUFE1, BOLA1, BOLA2 and BOLA4. Interacts in vivo only with BOLA2. Interacts with RGLG3 and RGLG4. Ubiquitinated at Lys-154. Polyubiquitinated by RGLG3 and RGLG4. Polyubiquitination of GRXS17 leads to its degradation by the proteasome.

It localises to the cytoplasm. Its function is as follows. May only reduce GSH-thiol disulfides, but not protein disulfides. Participates probably to the maturation of iron-sulfur proteins and to the regulation of the redox state of the BOLA proteins. The GRXS17-BOLA2 heterodimer binds a labile, oxygen sensitive iron-sulfur cluster. The sequence is that of Monothiol glutaredoxin-S17 from Arabidopsis thaliana (Mouse-ear cress).